The chain runs to 353 residues: Farnesyl pyrophosphate synthase (353 aa).

Positions 57, 60, and 96 each coordinate isopentenyl diphosphate. Residue lysine 57 is modified to N6-(2-hydroxyisobutyryl)lysine; alternate. Lysine 57 carries the N6-acetyllysine; alternate modification. Positions 103 and 107 each coordinate Mg(2+). Arginine 112 provides a ligand contact to dimethylallyl diphosphate. Arginine 113 serves as a coordination point for isopentenyl diphosphate. Residues lysine 200, threonine 201, glutamine 240, lysine 257, and lysine 266 each contribute to the dimethylallyl diphosphate site.

This sequence belongs to the FPP/GGPP synthase family. Homodimer. Interacts with RSAD2. Mg(2+) is required as a cofactor.

The protein resides in the cytoplasm. It catalyses the reaction isopentenyl diphosphate + dimethylallyl diphosphate = (2E)-geranyl diphosphate + diphosphate. It carries out the reaction isopentenyl diphosphate + (2E)-geranyl diphosphate = (2E,6E)-farnesyl diphosphate + diphosphate. It functions in the pathway isoprenoid biosynthesis; farnesyl diphosphate biosynthesis; farnesyl diphosphate from geranyl diphosphate and isopentenyl diphosphate: step 1/1. It participates in isoprenoid biosynthesis; geranyl diphosphate biosynthesis; geranyl diphosphate from dimethylallyl diphosphate and isopentenyl diphosphate: step 1/1. Inactivated by interferon-induced RSAD2. This inactivation may result of disruption of lipid rafts at the plasma membrane, and thus have an antiviral effect since many enveloped viruses need lipid rafts to bud efficiently out of the cell. Its function is as follows. Key enzyme in isoprenoid biosynthesis which catalyzes the formation of farnesyl diphosphate (FPP), a precursor for several classes of essential metabolites including sterols, dolichols, carotenoids, and ubiquinones. FPP also serves as substrate for protein farnesylation and geranylgeranylation. Catalyzes the sequential condensation of isopentenyl pyrophosphate with the allylic pyrophosphates, dimethylallyl pyrophosphate, and then with the resultant geranylpyrophosphate to the ultimate product farnesyl pyrophosphate. The polypeptide is Farnesyl pyrophosphate synthase (Fdps) (Mus musculus (Mouse)).